The primary structure comprises 1240 residues: Ubiquitin carboxyl-terminal hydrolase 36 (1240 aa).

Disordered stretches follow at residues 37–56 (AKTSNGGGDGSSTSGSSTDN) and 100–144 (SNGG…GTSA). 2 stretches are compositionally biased toward low complexity: residues 47–56 (SSTSGSSTDN) and 101–132 (NGGAASNGNGNYNGSNKTNGKFGAGNGHDNNG). A USP domain is found at 202–512 (TGMLNVGNTC…NAYIMFYELD (311 aa)). The active-site Nucleophile is the C211. H471 (proton acceptor) is an active-site residue. The segment at 637–705 (ANKSSCNTLN…KMFEESSESV (69 aa)) is disordered. A compositionally biased stretch (polar residues) spans 639–649 (KSSCNTLNNSK). The segment covering 650 to 662 (QHQPQQQQQQPQH) has biased composition (low complexity). Positions 668-680 (SDEEEDSDDDNDN) are enriched in acidic residues. At T715 the chain carries Phosphothreonine. Disordered regions lie at residues 723 to 818 (YESA…KQKT), 831 to 998 (YKNK…GESL), 1076 to 1163 (DMSS…EYES), and 1198 to 1240 (RFAG…QQQS). Phosphoserine is present on residues S725 and S727. The segment covering 733–744 (QQQQQQQTLQQQ) has biased composition (low complexity). A compositionally biased stretch (acidic residues) spans 759-769 (SDTDDDDDEEQ). Residues 794 to 815 (NSSSSKTKSASNASSANVNSSK) show a composition bias toward low complexity. The segment covering 843–859 (DDDDDDDEDEDEDEDEA) has biased composition (acidic residues). The span at 869 to 879 (TKSSSSSSSTS) shows a compositional bias: low complexity. Over residues 880–890 (LTNGWQQSQNG) the composition is skewed to polar residues. At S895 the chain carries Phosphoserine. The residue at position 898 (T898) is a Phosphothreonine. S901 carries the post-translational modification Phosphoserine. The segment covering 918–941 (DEDDDENVDGVADADDDDDNDEVA) has biased composition (acidic residues). Polar residues predominate over residues 976–988 (LNGSSKSQQTTPR). Low complexity predominate over residues 1076 to 1103 (DMSSSSSSSSSTNSSSNSSSRSNGNSSN). Residues 1111–1120 (AEAREQRKRD) show a composition bias toward basic and acidic residues. Over residues 1231–1240 (QSSGQQQQQS) the composition is skewed to low complexity.

The protein belongs to the peptidase C19 family. As to quaternary structure, interacts with atms/PAF1, but not with CycT.

It is found in the nucleus. The protein localises to the nucleolus. It catalyses the reaction Thiol-dependent hydrolysis of ester, thioester, amide, peptide and isopeptide bonds formed by the C-terminal Gly of ubiquitin (a 76-residue protein attached to proteins as an intracellular targeting signal).. Functionally, required for maintaining multiple types of adult stem cells, including male and female germline, epithelial follicle cell and intestinal stem cells. May function as a transcriptional repressor by continually deubiquiting histone H2B at the promoters of genes critical for cellular differentiation, thereby preventing histone H3 'Lys-4' trimethylation (H3K4). Controls selective autophagy activation by ubiquitinated proteins. This is Ubiquitin carboxyl-terminal hydrolase 36 (Usp36) from Drosophila grimshawi (Hawaiian fruit fly).